A 164-amino-acid chain; its full sequence is Lipoprotein signal peptidase (164 aa).

4 consecutive transmembrane segments (helical) span residues 6–26 (LGVLAGIVALVLDQVTKLWLL), 39–59 (VLPFFDLVLAWNTGISYGWFS), 65–85 (GQILMLAFKAVAIVALAIWMA), and 88–108 (TTKLATIGLGLIIGGAIGNAI). Catalysis depends on residues Asp-118 and Asp-140. A helical membrane pass occupies residues 141-161 (VAIVVGVAALLYDSLIGLPAA).

The protein belongs to the peptidase A8 family.

The protein resides in the cell inner membrane. It carries out the reaction Release of signal peptides from bacterial membrane prolipoproteins. Hydrolyzes -Xaa-Yaa-Zaa-|-(S,diacylglyceryl)Cys-, in which Xaa is hydrophobic (preferably Leu), and Yaa (Ala or Ser) and Zaa (Gly or Ala) have small, neutral side chains.. It participates in protein modification; lipoprotein biosynthesis (signal peptide cleavage). Functionally, this protein specifically catalyzes the removal of signal peptides from prolipoproteins. This Rhodopseudomonas palustris (strain ATCC BAA-98 / CGA009) protein is Lipoprotein signal peptidase.